Here is a 111-residue protein sequence, read N- to C-terminus: uncharacterized protein (111 aa).

The tract at residues 1–26 is disordered; sequence MDLKDGVEEEEGAGENGKGGTHAQRV.

This is an uncharacterized protein from Caenorhabditis elegans.